The sequence spans 196 residues: Peroxiredoxin TSA1-B (196 aa).

The Thioredoxin domain maps to 3-161; it reads PVVQQPAPSF…SLRLLEAFQF (159 aa). Residue 45-47 coordinates substrate; sequence TFV. Cys48 acts as the Cysteine sulfenic acid (-SOH) intermediate in catalysis. Arg124 is a binding site for substrate. Residues 173-196 are disordered; sequence WHPGDETIKPSPEASKEYFNKVNK. Basic and acidic residues predominate over residues 175-196; it reads PGDETIKPSPEASKEYFNKVNK.

This sequence belongs to the peroxiredoxin family. AhpC/Prx1 subfamily. Homodimer; disulfide-linked, upon oxidation.

It localises to the cell surface. The protein resides in the nucleus. The protein localises to the cytoplasm. It catalyses the reaction a hydroperoxide + [thioredoxin]-dithiol = an alcohol + [thioredoxin]-disulfide + H2O. Functionally, thiol-specific peroxidase that catalyzes the reduction of hydrogen peroxide and organic hydroperoxides to water and alcohols, respectively. Plays a role in cell protection against oxidative stress by detoxifying peroxides and as sensor of hydrogen peroxide-mediated signaling events. Also involved in the correct composition of the hyphal cell wall. In Candida albicans (strain SC5314 / ATCC MYA-2876) (Yeast), this protein is Peroxiredoxin TSA1-B.